Consider the following 168-residue polypeptide: Photosystem I assembly protein Ycf3 (168 aa).

TPR repeat units follow at residues 35-68, 72-105, and 120-153; these read AFTY…EIDP, SYIL…NPSL, and GEQA…APSN.

Belongs to the Ycf3 family.

It is found in the plastid. It localises to the chloroplast thylakoid membrane. In terms of biological role, essential for the assembly of the photosystem I (PSI) complex. May act as a chaperone-like factor to guide the assembly of the PSI subunits. In Physcomitrium patens (Spreading-leaved earth moss), this protein is Photosystem I assembly protein Ycf3.